The primary structure comprises 190 residues: Tereporin-Ca1 (190 aa).

The N-terminal region stretch occupies residues 2 to 21 (TAGSSLAGTTLSGLAASGYR). Residues Gly78, Ser96, Pro98, Tyr131, and Tyr132 each contribute to the phosphocholine site. Positions 138 to 140 (KGE) match the Cell attachment site, crucial for protein stability motif.

Belongs to the actinoporin family. Conoidea subfamily. As to quaternary structure, octamer or nonamer in membranes. Monomer in the soluble state. Expressed by the venom duct.

It is found in the secreted. It localises to the nematocyst. The protein resides in the target cell membrane. In terms of biological role, pore-forming protein that forms pores of around 1 nm and causes cardiac stimulation and cytolysis. This is Tereporin-Ca1 from Terebra anilis (Auger snail).